The primary structure comprises 70 residues: Cytochrome c oxidase subunit 8B, mitochondrial (70 aa).

A mitochondrion-targeting transit peptide spans 1-24; sequence MPRLPPILRLLQAPAKFTVVPKAH. Topologically, residues 25 to 38 are mitochondrial matrix; the sequence is VSAKPAKTPTSAVE. A helical transmembrane segment spans residues 39-60; the sequence is QAVGISAIVVGFMVPAGWVLAH. The Mitochondrial intermembrane portion of the chain corresponds to 61 to 70; the sequence is LESYKKSSAA.

It belongs to the cytochrome c oxidase VIII family. As to quaternary structure, component of the cytochrome c oxidase (complex IV, CIV), a multisubunit enzyme composed of 14 subunits. The complex is composed of a catalytic core of 3 subunits MT-CO1, MT-CO2 and MT-CO3, encoded in the mitochondrial DNA, and 11 supernumerary subunits COX4I, COX5A, COX5B, COX6A, COX6B, COX6C, COX7A, COX7B, COX7C, COX8 and NDUFA4, which are encoded in the nuclear genome. The complex exists as a monomer or a dimer and forms supercomplexes (SCs) in the inner mitochondrial membrane with NADH-ubiquinone oxidoreductase (complex I, CI) and ubiquinol-cytochrome c oxidoreductase (cytochrome b-c1 complex, complex III, CIII), resulting in different assemblies (supercomplex SCI(1)III(2)IV(1) and megacomplex MCI(2)III(2)IV(2)).

It localises to the mitochondrion inner membrane. The protein operates within energy metabolism; oxidative phosphorylation. Its function is as follows. Component of the cytochrome c oxidase, the last enzyme in the mitochondrial electron transport chain which drives oxidative phosphorylation. The respiratory chain contains 3 multisubunit complexes succinate dehydrogenase (complex II, CII), ubiquinol-cytochrome c oxidoreductase (cytochrome b-c1 complex, complex III, CIII) and cytochrome c oxidase (complex IV, CIV), that cooperate to transfer electrons derived from NADH and succinate to molecular oxygen, creating an electrochemical gradient over the inner membrane that drives transmembrane transport and the ATP synthase. Cytochrome c oxidase is the component of the respiratory chain that catalyzes the reduction of oxygen to water. Electrons originating from reduced cytochrome c in the intermembrane space (IMS) are transferred via the dinuclear copper A center (CU(A)) of subunit 2 and heme A of subunit 1 to the active site in subunit 1, a binuclear center (BNC) formed by heme A3 and copper B (CU(B)). The BNC reduces molecular oxygen to 2 water molecules using 4 electrons from cytochrome c in the IMS and 4 protons from the mitochondrial matrix. The protein is Cytochrome c oxidase subunit 8B, mitochondrial (Cox8b) of Mus musculus (Mouse).